Consider the following 338-residue polypeptide: Phosphoribosylformylglycinamidine cyclo-ligase (338 aa).

The protein belongs to the AIR synthase family.

Its subcellular location is the cytoplasm. The enzyme catalyses 2-formamido-N(1)-(5-O-phospho-beta-D-ribosyl)acetamidine + ATP = 5-amino-1-(5-phospho-beta-D-ribosyl)imidazole + ADP + phosphate + H(+). The protein operates within purine metabolism; IMP biosynthesis via de novo pathway; 5-amino-1-(5-phospho-D-ribosyl)imidazole from N(2)-formyl-N(1)-(5-phospho-D-ribosyl)glycinamide: step 2/2. The chain is Phosphoribosylformylglycinamidine cyclo-ligase from Thermoplasma acidophilum (strain ATCC 25905 / DSM 1728 / JCM 9062 / NBRC 15155 / AMRC-C165).